Reading from the N-terminus, the 311-residue chain is Aspartate carbamoyltransferase catalytic subunit (311 aa).

Residues R58 and T59 each coordinate carbamoyl phosphate. Residue K86 coordinates L-aspartate. 3 residues coordinate carbamoyl phosphate: R108, H136, and Q139. L-aspartate contacts are provided by R169 and R223. The carbamoyl phosphate site is built by G264 and P265.

The protein belongs to the aspartate/ornithine carbamoyltransferase superfamily. ATCase family. In terms of assembly, heterododecamer (2C3:3R2) of six catalytic PyrB chains organized as two trimers (C3), and six regulatory PyrI chains organized as three dimers (R2).

The enzyme catalyses carbamoyl phosphate + L-aspartate = N-carbamoyl-L-aspartate + phosphate + H(+). It participates in pyrimidine metabolism; UMP biosynthesis via de novo pathway; (S)-dihydroorotate from bicarbonate: step 2/3. Catalyzes the condensation of carbamoyl phosphate and aspartate to form carbamoyl aspartate and inorganic phosphate, the committed step in the de novo pyrimidine nucleotide biosynthesis pathway. The polypeptide is Aspartate carbamoyltransferase catalytic subunit (Ruegeria pomeroyi (strain ATCC 700808 / DSM 15171 / DSS-3) (Silicibacter pomeroyi)).